The sequence spans 123 residues: Small ribosomal subunit protein uS12 (123 aa).

Aspartate 89 is subject to 3-methylthioaspartic acid.

It belongs to the universal ribosomal protein uS12 family. In terms of assembly, part of the 30S ribosomal subunit. Contacts proteins S8 and S17. May interact with IF1 in the 30S initiation complex.

In terms of biological role, with S4 and S5 plays an important role in translational accuracy. Functionally, interacts with and stabilizes bases of the 16S rRNA that are involved in tRNA selection in the A site and with the mRNA backbone. Located at the interface of the 30S and 50S subunits, it traverses the body of the 30S subunit contacting proteins on the other side and probably holding the rRNA structure together. The combined cluster of proteins S8, S12 and S17 appears to hold together the shoulder and platform of the 30S subunit. In Pelagibacter ubique (strain HTCC1062), this protein is Small ribosomal subunit protein uS12.